Reading from the N-terminus, the 615-residue chain is Prolycopene isomerase, chloroplastic (615 aa).

A chloroplast-targeting transit peptide spans 1–62 (MSTSIFETPL…PKPLNFGFCR (62 aa)).

The protein belongs to the carotenoid/retinoid oxidoreductase family. CrtISO subfamily. The cofactor is NAD(+). It depends on NADP(+) as a cofactor. FAD is required as a cofactor.

It is found in the plastid. The protein resides in the chloroplast membrane. It carries out the reaction 7,7',9,9'-tetra-cis-lycopene = all-trans-lycopene. The protein operates within carotenoid biosynthesis; lycopene biosynthesis. Functionally, carotene cis-trans-isomerase that converts 7,9,9'-tri-cis-neurosporene to 9'-cis-neurosporene and 7,9,9',7'-tetra-cis-lycopene (also known as prolycopene) into all-trans-lycopene. Isomerization requires redox-active components, suggesting that isomerization is achieved by a reversible redox reaction acting at specific double bonds. Isomerizes adjacent cis-double bonds at C7 and C9 pairwise into the trans-configuration, but is incapable of isomerizing single cis-double bonds at C9 and C9'. The chain is Prolycopene isomerase, chloroplastic (CRTISO) from Daucus carota (Wild carrot).